Consider the following 478-residue polypeptide: Glutamine synthetase (478 aa).

One can recognise a GS beta-grasp domain in the interval 16–100 (EKVEYVDVRF…INFFVHDPFT (85 aa)). The region spanning 108 to 478 (PRNIARKAEN…PYEFALYYDV (371 aa)) is the GS catalytic domain. E133 and E135 together coordinate Mg(2+). E214 lines the ATP pocket. Mg(2+) contacts are provided by E219 and E227. 230–232 (YQF) provides a ligand contact to ATP. Residues 271–272 (NG) and G272 contribute to the L-glutamate site. H276 is a Mg(2+) binding site. ATP is bound by residues 278–280 (HQS) and S280. R329, E335, and R347 together coordinate L-glutamate. The ATP site is built by R347, R352, and K361. E366 is a binding site for Mg(2+). Residue R368 coordinates L-glutamate. Y406 carries the O-AMP-tyrosine modification.

This sequence belongs to the glutamine synthetase family. Oligomer of 12 subunits arranged in the form of two hexagons. Mg(2+) serves as cofactor.

It localises to the cytoplasm. It catalyses the reaction L-glutamate + NH4(+) + ATP = L-glutamine + ADP + phosphate + H(+). When cellular nitrogen levels are high, the C-terminal adenylyl transferase (AT) of GlnE inhibits GlnA by covalent transfer of an adenylyl group from ATP to Tyr-406. Conversely, when nitrogen levels are low, the N-terminal adenylyl removase (AR) of GlnE activates GlnA by removing the adenylyl group by phosphorolysis. The fully adenylated enzyme complex is inactive. Involved in nitrogen metabolism via ammonium assimilation. Catalyzes the ATP-dependent biosynthesis of glutamine from glutamate and ammonia. Also plays a key role in controlling the ammonia levels within infected host cells and so contributes to the pathogens capacity to inhibit phagosome acidification and phagosome-lysosome fusion. Involved in cell wall biosynthesis via the production of the major component poly-L-glutamine (PLG). PLG synthesis in the cell wall occurs only in nitrogen limiting conditions and on the contrary high nitrogen conditions inhibit PLG synthesis. In Mycobacterium bovis (strain ATCC BAA-935 / AF2122/97), this protein is Glutamine synthetase.